A 180-amino-acid chain; its full sequence is Acireductone dioxygenase (180 aa).

Fe(2+) is bound by residues His97, His99, Glu103, and His141. Residues His97, His99, Glu103, and His141 each contribute to the Ni(2+) site.

It belongs to the acireductone dioxygenase (ARD) family. In terms of assembly, monomer. It depends on Fe(2+) as a cofactor. Ni(2+) serves as cofactor.

It carries out the reaction 1,2-dihydroxy-5-(methylsulfanyl)pent-1-en-3-one + O2 = 3-(methylsulfanyl)propanoate + CO + formate + 2 H(+). The enzyme catalyses 1,2-dihydroxy-5-(methylsulfanyl)pent-1-en-3-one + O2 = 4-methylsulfanyl-2-oxobutanoate + formate + 2 H(+). It participates in amino-acid biosynthesis; L-methionine biosynthesis via salvage pathway; L-methionine from S-methyl-5-thio-alpha-D-ribose 1-phosphate: step 5/6. Its function is as follows. Catalyzes 2 different reactions between oxygen and the acireductone 1,2-dihydroxy-3-keto-5-methylthiopentene (DHK-MTPene) depending upon the metal bound in the active site. Fe-containing acireductone dioxygenase (Fe-ARD) produces formate and 2-keto-4-methylthiobutyrate (KMTB), the alpha-ketoacid precursor of methionine in the methionine recycle pathway. Ni-containing acireductone dioxygenase (Ni-ARD) produces methylthiopropionate, carbon monoxide and formate, and does not lie on the methionine recycle pathway. The polypeptide is Acireductone dioxygenase (Citrobacter koseri (strain ATCC BAA-895 / CDC 4225-83 / SGSC4696)).